The chain runs to 193 residues: Recombination protein RecR (193 aa).

The segment at 61–76 (CASCNALSETEVSEIC) adopts a C4-type; degenerate zinc-finger fold. Residues 84-170 (SQLCMVLHPR…TFTKIAQGVP (87 aa)) enclose the Toprim domain.

Belongs to the RecR family.

Its function is as follows. May play a role in DNA repair. It seems to be involved in an RecBC-independent recombinational process of DNA repair. It may act with RecF and RecO. The sequence is that of Recombination protein RecR from Helicobacter pylori (strain J99 / ATCC 700824) (Campylobacter pylori J99).